Reading from the N-terminus, the 725-residue chain is Putative oligopeptide transporter YGL114W (725 aa).

9 consecutive transmembrane segments (helical) span residues 28–48 (ATIAGIAIGSLVLTSNFQFGL), 134–154 (FRELLIWSTALAFFGIFFAVP), 254–274 (IIILLKTFVVSSLYTMVSYFV), 353–373 (WILWSSLSIMVADSVVAFIVV), 449–469 (ISGCLVSSIICIVSIIYLFGI), 472–492 (IPLYAIITALILALFLSILGI), 564–584 (FCAQLIGACWSIILSSFMYLC), 644–664 (YGYGWILYIPSGVAVGVGIFN), and 697–717 (IVFSSGLVLGEGIFSVINMLF).

This sequence belongs to the oligopeptide OPT transporter family.

It is found in the membrane. The chain is Putative oligopeptide transporter YGL114W from Saccharomyces cerevisiae (strain ATCC 204508 / S288c) (Baker's yeast).